Consider the following 204-residue polypeptide: Putative peptidase PfaP (204 aa).

Positions 1–27 are cleaved as a signal peptide; it reads MRLRKTRKIVVSMKDMAASGGYYIASS. The active-site Nucleophile is Ser19. Residue Lys70 is the Proton donor/acceptor of the active site.

Belongs to the peptidase S49 family.

Functionally, possible protease. May be involved in export of periplasmic flagella proteins. This is Putative peptidase PfaP (pfaP) from Leptospira borgpetersenii.